The following is a 444-amino-acid chain: tRNA modification GTPase MnmE (444 aa).

Arg21, Glu79, and Lys118 together coordinate (6S)-5-formyl-5,6,7,8-tetrahydrofolate. The 151-residue stretch at 215-365 folds into the TrmE-type G domain; that stretch reads GLNVVIVGKP…LVNEIKTNLK (151 aa). Asn225 is a binding site for K(+). GTP is bound by residues 225-230, 244-250, and 269-272; these read NVGKSS, SDIKGTT, and DTAG. Ser229 serves as a coordination point for Mg(2+). K(+)-binding residues include Ser244, Ile246, and Thr249. Residue Thr250 participates in Mg(2+) binding. Residue Lys444 coordinates (6S)-5-formyl-5,6,7,8-tetrahydrofolate.

The protein belongs to the TRAFAC class TrmE-Era-EngA-EngB-Septin-like GTPase superfamily. TrmE GTPase family. Homodimer. Heterotetramer of two MnmE and two MnmG subunits. K(+) serves as cofactor.

It is found in the cytoplasm. Exhibits a very high intrinsic GTPase hydrolysis rate. Involved in the addition of a carboxymethylaminomethyl (cmnm) group at the wobble position (U34) of certain tRNAs, forming tRNA-cmnm(5)s(2)U34. The protein is tRNA modification GTPase MnmE of Malacoplasma penetrans (strain HF-2) (Mycoplasma penetrans).